The chain runs to 418 residues: Thyroxine-binding globulin (418 aa).

Positions 1-20 are cleaved as a signal peptide; sequence MSVFFYLFVLVFGLQATIHC. N-linked (GlcNAc...) asparagine glycans are attached at residues asparagine 24, asparagine 39, asparagine 102, asparagine 168, asparagine 227, and asparagine 256. The thyroxine site is built by asparagine 296 and lysine 401.

It belongs to the serpin family.

It localises to the secreted. In terms of biological role, major thyroid hormone transport protein in serum. This is Thyroxine-binding globulin (Serpina7) from Mus musculus (Mouse).